Here is a 292-residue protein sequence, read N- to C-terminus: ATP synthase gamma chain (292 aa).

This sequence belongs to the ATPase gamma chain family. In terms of assembly, F-type ATPases have 2 components, CF(1) - the catalytic core - and CF(0) - the membrane proton channel. CF(1) has five subunits: alpha(3), beta(3), gamma(1), delta(1), epsilon(1). CF(0) has three main subunits: a, b and c.

It localises to the cell inner membrane. Its function is as follows. Produces ATP from ADP in the presence of a proton gradient across the membrane. The gamma chain is believed to be important in regulating ATPase activity and the flow of protons through the CF(0) complex. The polypeptide is ATP synthase gamma chain (Brucella abortus (strain S19)).